A 647-amino-acid chain; its full sequence is Putative ankyrin repeat protein L764 (647 aa).

9 ANK repeats span residues 123 to 154, 202 to 231, 233 to 256, 258 to 284, 289 to 319, 348 to 377, 401 to 431, 529 to 558, and 588 to 617; these read LKDREIYLNSNCDDINLIKFIVTRNDYFQINL, LTQEHIKLAVQNRKIPVLEHLINLGIEYDL, EIINDIKDFDILKYMLEIGNSLNE, NVNIIIFNIHTTQLIEYLMNLGYTINS, SMFSHMLIVSENTDIVEFLKSINAKDSDLTV, DCNLFLKYAIISQDIPNIEYSINKGADLKK, NDVNNFILKIIENDCIETLKYLVDNNYNIDL, FILKEFPEECSSEKMDTIKFLLDFNADNNE, and NGQNIVEYLISDGDHEIFRYLYYNGFDVKN.

The sequence is that of Putative ankyrin repeat protein L764 from Acanthamoeba polyphaga (Amoeba).